We begin with the raw amino-acid sequence, 102 residues long: Small ribosomal subunit protein bS18c (102 aa).

Belongs to the bacterial ribosomal protein bS18 family. As to quaternary structure, part of the 30S ribosomal subunit.

It localises to the plastid. The protein localises to the chloroplast. The chain is Small ribosomal subunit protein bS18c from Phaseolus vulgaris (Kidney bean).